The following is a 442-amino-acid chain: MTATLKKPPIYKVLYFQVLTAVVIGVLLGHFYPSLGVDMKPFGDAFIKGIKMLIAPIIFCTVVLGIAGMEDMKKVGKTGGLALLYFEIVSTIALMVGLVVVNVLQPGAGMNIDPASLDTKGIAAYTGPGKMGTTTEFLLNIIPSSAVDAFAKGEILQVLFIAILFGFALHKFGGRGTMVFDLIEKTSHVLFDMIAIIMKFAPIGAFGAMAFTIGKYGIGSLFSLGKLMGSFYLTCLLFVFIVLGIIARLNGFNIFKFVRYIKEELLIVLGTSSSESVLPRMMEKMELLGAKKACVGLVIPTGYSFNLDGTSIYLTMAAVFIAQATNTPMTLLQEVTLLAVLLLTSKGAAGVTGSGFIVLAATLSAVGDVPVAGLAIILGIDRFMSEARALTNLVGNGVATIVVAKWTGELDQKQLTRALNRDDWIEAQEPEMILDHQQDKMR.

The next 9 helical transmembrane spans lie at 13-33 (VLYF…HFYP), 49-69 (GIKM…IAGM), 81-101 (LALL…LVVV), 149-169 (AFAK…GFAL), 193-213 (MIAI…AFTI), 227-247 (LMGS…GIIA), 312-332 (IYLT…MTLL), 336-356 (TLLA…GSGF), and 357-377 (IVLA…LAII).

This sequence belongs to the dicarboxylate/amino acid:cation symporter (DAACS) (TC 2.A.23) family.

The protein resides in the cell membrane. Functionally, responsible for the transport of dicarboxylates such as succinate, fumarate, and malate across the membrane. The sequence is that of C4-dicarboxylate transport protein from Polynucleobacter asymbioticus (strain DSM 18221 / CIP 109841 / QLW-P1DMWA-1) (Polynucleobacter necessarius subsp. asymbioticus).